The chain runs to 191 residues: Cdc42 homolog (191 aa).

10-17 provides a ligand contact to GTP; that stretch reads GDGAVGKT. Positions 32-40 match the Effector region motif; sequence YVPTVFDNY. GTP is bound by residues 57–61 and 115–118; these read DTAGQ and TQID. Cysteine 188 is subject to Cysteine methyl ester. Cysteine 188 is lipidated: S-geranylgeranyl cysteine. A propeptide spans 189-191 (removed in mature form); sequence KFL.

It belongs to the small GTPase superfamily. Rho family. CDC42 subfamily.

It localises to the cell junction. The protein localises to the adherens junction. The protein resides in the cell membrane. It catalyses the reaction GTP + H2O = GDP + phosphate + H(+). Regulates mbt kinase activity and is also required to recruit mbt to adherens junctions. Together with mbt, regulates photoreceptor cell morphogenesis. In Drosophila pseudoobscura pseudoobscura (Fruit fly), this protein is Cdc42 homolog.